A 574-amino-acid chain; its full sequence is DNA polymerase I (574 aa).

Residues 4–161 form the 3'-5' exonuclease domain; that stretch reads EYVTGEEGLK…ELFPKMRDML (158 aa).

The protein belongs to the DNA polymerase type-A family.

The catalysed reaction is DNA(n) + a 2'-deoxyribonucleoside 5'-triphosphate = DNA(n+1) + diphosphate. The sequence is that of DNA polymerase I (polA) from Aquifex aeolicus (strain VF5).